Consider the following 299-residue polypeptide: Taste receptor type 2 member 1 (299 aa).

Residues methionine 1–tyrosine 9 lie on the Extracellular side of the membrane. Residues phenylalanine 10 to valine 30 traverse the membrane as a helical segment. The Cytoplasmic segment spans residues asparagine 31–arginine 55. The chain crosses the membrane as a helical span at residues isoleucine 56–isoleucine 76. The Extracellular segment spans residues methionine 77–asparagine 81. Residues cysteine 82–phenylalanine 102 form a helical membrane-spanning segment. The Cytoplasmic portion of the chain corresponds to tyrosine 103–lysine 124. The chain crosses the membrane as a helical span at residues leucine 125–serine 145. Topologically, residues lysine 146–serine 178 are extracellular. A glycan (N-linked (GlcNAc...) asparagine) is linked at asparagine 163. Residues phenylalanine 179–phenylalanine 199 traverse the membrane as a helical segment. Residues serine 200–alanine 222 lie on the Cytoplasmic side of the membrane. The helical transmembrane segment at proline 223–isoleucine 243 threads the bilayer. The Extracellular segment spans residues lysine 244 to phenylalanine 257. A helical transmembrane segment spans residues isoleucine 258–isoleucine 278. The Cytoplasmic portion of the chain corresponds to leucine 279–glutamine 299.

This sequence belongs to the G-protein coupled receptor T2R family.

Its subcellular location is the membrane. Its function is as follows. Receptor that may play a role in the perception of bitterness and is gustducin-linked. May play a role in sensing the chemical composition of the gastrointestinal content. The activity of this receptor may stimulate alpha gustducin, mediate PLC-beta-2 activation and lead to the gating of TRPM5. The protein is Taste receptor type 2 member 1 (TAS2R1) of Pan paniscus (Pygmy chimpanzee).